The primary structure comprises 207 residues: Cytochrome c biogenesis ATP-binding export protein CcmA (207 aa).

The region spanning 4–207 (LEVRELLCER…RISLTQTRAV (204 aa)) is the ABC transporter domain. 36–43 (GSNGAGKT) is an ATP binding site.

The protein belongs to the ABC transporter superfamily. CcmA exporter (TC 3.A.1.107) family. As to quaternary structure, the complex is composed of two ATP-binding proteins (CcmA) and two transmembrane proteins (CcmB).

Its subcellular location is the cell inner membrane. The catalysed reaction is heme b(in) + ATP + H2O = heme b(out) + ADP + phosphate + H(+). In terms of biological role, part of the ABC transporter complex CcmAB involved in the biogenesis of c-type cytochromes; once thought to export heme, this seems not to be the case, but its exact role is uncertain. Responsible for energy coupling to the transport system. The sequence is that of Cytochrome c biogenesis ATP-binding export protein CcmA from Shigella dysenteriae serotype 1 (strain Sd197).